A 251-amino-acid chain; its full sequence is MRRKIVAGNWKLHGSRQFANELLGQVAAGLPLEGVDVVILPPLPYLGELVEDFGETGLAFGAQDVSSNEKGAYTGEVCAAMLVEVGARYGLVGHSERRQYHHESSELVARKFAAAQHAGLVPVLCVGETLEQREAGQTEAVIASQLAPVLELVGAAGFAQAVVAYEPVWAIGTGRTATKEQAQQVHAFIRGEVARIDARIADSLPIVYGGSVKPDNAGELFAQPDVDGGLVGGASLVAADFLAIARAAAAN.

9-11 (NWK) is a binding site for substrate. His94 acts as the Electrophile in catalysis. Glu166 (proton acceptor) is an active-site residue. Substrate-binding positions include Gly172, Ser211, and 232–233 (GG).

The protein belongs to the triosephosphate isomerase family. As to quaternary structure, homodimer.

It is found in the cytoplasm. The catalysed reaction is D-glyceraldehyde 3-phosphate = dihydroxyacetone phosphate. It functions in the pathway carbohydrate biosynthesis; gluconeogenesis. It participates in carbohydrate degradation; glycolysis; D-glyceraldehyde 3-phosphate from glycerone phosphate: step 1/1. In terms of biological role, involved in the gluconeogenesis. Catalyzes stereospecifically the conversion of dihydroxyacetone phosphate (DHAP) to D-glyceraldehyde-3-phosphate (G3P). In Stenotrophomonas maltophilia (strain K279a), this protein is Triosephosphate isomerase.